Reading from the N-terminus, the 173-residue chain is tRNA-specific adenosine deaminase (173 aa).

The CMP/dCMP-type deaminase domain maps to Glu9–Arg121. His61 lines the Zn(2+) pocket. Catalysis depends on Glu63, which acts as the Proton donor. Zn(2+) contacts are provided by Cys91 and Cys94.

Belongs to the cytidine and deoxycytidylate deaminase family. As to quaternary structure, homodimer. Requires Zn(2+) as cofactor.

The catalysed reaction is adenosine(34) in tRNA + H2O + H(+) = inosine(34) in tRNA + NH4(+). Catalyzes the deamination of adenosine to inosine at the wobble position 34 of tRNA(Arg2). In Haemophilus influenzae (strain ATCC 51907 / DSM 11121 / KW20 / Rd), this protein is tRNA-specific adenosine deaminase.